Here is a 1318-residue protein sequence, read N- to C-terminus: Meiotically up-regulated gene 79 protein (1318 aa).

Disordered regions lie at residues 177–198, 208–227, and 360–387; these read PVNSHPSQSMFGNGVRASSGSY, EEELPSSKKRQRTPPPIVVT, and PQALAAAESPTTKAPTTKAPTSEAPPKG. Over residues 364–384 the composition is skewed to low complexity; sequence AAAESPTTKAPTTKAPTSEAP. In terms of domain architecture, PH spans 1049–1158; that stretch reads MISYKKMVLS…WIHSLNFNAA (110 aa).

The protein resides in the nucleus. Functionally, appears to have a role in sporulation. The chain is Meiotically up-regulated gene 79 protein (mug79) from Schizosaccharomyces pombe (strain 972 / ATCC 24843) (Fission yeast).